Consider the following 355-residue polypeptide: 12-oxophytodienoate reductase-like protein (355 aa).

FMN is bound by residues 30–32, A63, and Q105; that span reads ALT. 175 to 178 is a binding site for substrate; that stretch reads NASS. The Proton donor role is filled by Y181. R265 serves as a coordination point for substrate. FMN contacts are provided by residues G288 and 309 to 310; that span reads GR.

The protein belongs to the NADH:flavin oxidoreductase/NADH oxidase family. FMN is required as a cofactor. Weakly expressed in flowers and roots.

It is found in the cytoplasm. In terms of biological role, may be involved in the biosynthesis or metabolism of oxylipin signaling molecules. The chain is 12-oxophytodienoate reductase-like protein (OPR2) from Solanum lycopersicum (Tomato).